The primary structure comprises 350 residues: Holliday junction branch migration complex subunit RuvB (350 aa).

The disordered stretch occupies residues 1–20; that stretch reads MIEADRLITASPREREEQQD. The interval 4–184 is large ATPase domain (RuvB-L); the sequence is ADRLITASPR…FGIVQRLEFY (181 aa). Residues Ile23, Arg24, Gly65, Lys68, Thr69, Thr70, 131 to 133, Arg174, Tyr184, and Arg221 contribute to the ATP site; that span reads EDF. Thr69 is a binding site for Mg(2+). A small ATPAse domain (RuvB-S) region spans residues 185–255; sequence GIDDLATIVT…IADQALNLLD (71 aa). The interval 258-350 is head domain (RuvB-H); the sequence is ERGFDHSDRR…SGDLFAVSDE (93 aa). DNA contacts are provided by Arg294, Arg313, and Arg318.

The protein belongs to the RuvB family. In terms of assembly, homohexamer. Forms an RuvA(8)-RuvB(12)-Holliday junction (HJ) complex. HJ DNA is sandwiched between 2 RuvA tetramers; dsDNA enters through RuvA and exits via RuvB. An RuvB hexamer assembles on each DNA strand where it exits the tetramer. Each RuvB hexamer is contacted by two RuvA subunits (via domain III) on 2 adjacent RuvB subunits; this complex drives branch migration. In the full resolvosome a probable DNA-RuvA(4)-RuvB(12)-RuvC(2) complex forms which resolves the HJ.

The protein resides in the cytoplasm. The catalysed reaction is ATP + H2O = ADP + phosphate + H(+). Its function is as follows. The RuvA-RuvB-RuvC complex processes Holliday junction (HJ) DNA during genetic recombination and DNA repair, while the RuvA-RuvB complex plays an important role in the rescue of blocked DNA replication forks via replication fork reversal (RFR). RuvA specifically binds to HJ cruciform DNA, conferring on it an open structure. The RuvB hexamer acts as an ATP-dependent pump, pulling dsDNA into and through the RuvAB complex. RuvB forms 2 homohexamers on either side of HJ DNA bound by 1 or 2 RuvA tetramers; 4 subunits per hexamer contact DNA at a time. Coordinated motions by a converter formed by DNA-disengaged RuvB subunits stimulates ATP hydrolysis and nucleotide exchange. Immobilization of the converter enables RuvB to convert the ATP-contained energy into a lever motion, pulling 2 nucleotides of DNA out of the RuvA tetramer per ATP hydrolyzed, thus driving DNA branch migration. The RuvB motors rotate together with the DNA substrate, which together with the progressing nucleotide cycle form the mechanistic basis for DNA recombination by continuous HJ branch migration. Branch migration allows RuvC to scan DNA until it finds its consensus sequence, where it cleaves and resolves cruciform DNA. This is Holliday junction branch migration complex subunit RuvB from Ectopseudomonas mendocina (strain ymp) (Pseudomonas mendocina).